The following is a 201-amino-acid chain: Holliday junction resolvase RecU (201 aa).

The Mg(2+) site is built by Thr-87, Asp-89, Glu-102, and Gln-121.

Belongs to the RecU family. Mg(2+) is required as a cofactor.

Its subcellular location is the cytoplasm. It carries out the reaction Endonucleolytic cleavage at a junction such as a reciprocal single-stranded crossover between two homologous DNA duplexes (Holliday junction).. Functionally, endonuclease that resolves Holliday junction intermediates in genetic recombination. Cleaves mobile four-strand junctions by introducing symmetrical nicks in paired strands. Promotes annealing of linear ssDNA with homologous dsDNA. Required for DNA repair, homologous recombination and chromosome segregation. This Listeria welshimeri serovar 6b (strain ATCC 35897 / DSM 20650 / CCUG 15529 / CIP 8149 / NCTC 11857 / SLCC 5334 / V8) protein is Holliday junction resolvase RecU.